The following is a 253-amino-acid chain: ATP synthase subunit b 1 (253 aa).

A helical membrane pass occupies residues 5–27; the sequence is GWTVALQAVNFLILVLLLRHFLY.

Belongs to the ATPase B chain family. In terms of assembly, F-type ATPases have 2 components, F(1) - the catalytic core - and F(0) - the membrane proton channel. F(1) has five subunits: alpha(3), beta(3), gamma(1), delta(1), epsilon(1). F(0) has three main subunits: a(1), b(2) and c(10-14). The alpha and beta chains form an alternating ring which encloses part of the gamma chain. F(1) is attached to F(0) by a central stalk formed by the gamma and epsilon chains, while a peripheral stalk is formed by the delta and b chains.

Its subcellular location is the cell inner membrane. Its function is as follows. F(1)F(0) ATP synthase produces ATP from ADP in the presence of a proton or sodium gradient. F-type ATPases consist of two structural domains, F(1) containing the extramembraneous catalytic core and F(0) containing the membrane proton channel, linked together by a central stalk and a peripheral stalk. During catalysis, ATP synthesis in the catalytic domain of F(1) is coupled via a rotary mechanism of the central stalk subunits to proton translocation. Functionally, component of the F(0) channel, it forms part of the peripheral stalk, linking F(1) to F(0). In Rhodospirillum centenum (strain ATCC 51521 / SW), this protein is ATP synthase subunit b 1.